The primary structure comprises 410 residues: Argininosuccinate synthase (410 aa).

Residues 10–18 and Ala37 each bind ATP; that span reads AYSGGLDTS. Tyr90 and Ser95 together coordinate L-citrulline. Position 120 (Gly120) interacts with ATP. L-aspartate-binding residues include Thr122, Asn126, and Asp127. L-citrulline is bound at residue Asn126. Residues Arg130, Ser182, Ser191, Glu267, and Tyr279 each contribute to the L-citrulline site.

It belongs to the argininosuccinate synthase family. Type 1 subfamily. In terms of assembly, homotetramer.

The protein resides in the cytoplasm. The catalysed reaction is L-citrulline + L-aspartate + ATP = 2-(N(omega)-L-arginino)succinate + AMP + diphosphate + H(+). It functions in the pathway amino-acid biosynthesis; L-arginine biosynthesis; L-arginine from L-ornithine and carbamoyl phosphate: step 2/3. In Polynucleobacter asymbioticus (strain DSM 18221 / CIP 109841 / QLW-P1DMWA-1) (Polynucleobacter necessarius subsp. asymbioticus), this protein is Argininosuccinate synthase.